A 574-amino-acid polypeptide reads, in one-letter code: Septation ring formation regulator EzrA (574 aa).

At 1–7 the chain is on the extracellular side; the sequence is MSSGIIL. The chain crosses the membrane as a helical span at residues 8–26; sequence LIVAIVLLVIIAYLVGVII. Residues 27–574 lie on the Cytoplasmic side of the membrane; sequence RKRNDSLITS…YEKTREHIRF (548 aa). Coiled-coil stretches lie at residues 102–141, 274–350, and 459–520; these read NFIR…EEKN, ELVT…ETES, and QLEA…SFEA.

The protein belongs to the EzrA family.

Its subcellular location is the cell membrane. Negative regulator of FtsZ ring formation; modulates the frequency and position of FtsZ ring formation. Inhibits FtsZ ring formation at polar sites. Interacts either with FtsZ or with one of its binding partners to promote depolymerization. This is Septation ring formation regulator EzrA from Streptococcus pyogenes serotype M3 (strain SSI-1).